Consider the following 113-residue polypeptide: Small ribosomal subunit protein bS6 (113 aa).

This sequence belongs to the bacterial ribosomal protein bS6 family.

Its function is as follows. Binds together with bS18 to 16S ribosomal RNA. The sequence is that of Small ribosomal subunit protein bS6 from Vesicomyosocius okutanii subsp. Calyptogena okutanii (strain HA).